The sequence spans 88 residues: Small ribosomal subunit protein uS17 (88 aa).

It belongs to the universal ribosomal protein uS17 family. Part of the 30S ribosomal subunit.

In terms of biological role, one of the primary rRNA binding proteins, it binds specifically to the 5'-end of 16S ribosomal RNA. The protein is Small ribosomal subunit protein uS17 of Xylella fastidiosa (strain M23).